A 224-amino-acid chain; its full sequence is Ras-related protein Rab-11C (224 aa).

17-24 (GDSAVGKS) contacts GTP. The Effector region signature appears at 39-47 (TKATIGVDF). GTP is bound by residues 65-69 (DTAGQ) and 123-126 (NKSD). The interval 194-224 (QGKKLTPLSDPAPQLTANTTSTHQEKKSGCC) is disordered. 2 S-geranylgeranyl cysteine lipidation sites follow: C223 and C224.

Belongs to the small GTPase superfamily. Rab family.

The protein resides in the membrane. The sequence is that of Ras-related protein Rab-11C (rab11C) from Dictyostelium discoideum (Social amoeba).